An 89-amino-acid chain; its full sequence is MALTAEQKKEILRSYGLHETDTGSPEAQIALLTKRIADLTEHLKVHKHDHHSRRGLLLLVGRRRRLIKYISQIDVERYRSLIERLGLRR.

Belongs to the universal ribosomal protein uS15 family. Part of the 30S ribosomal subunit. Forms a bridge to the 50S subunit in the 70S ribosome, contacting the 23S rRNA.

Functionally, one of the primary rRNA binding proteins, it binds directly to 16S rRNA where it helps nucleate assembly of the platform of the 30S subunit by binding and bridging several RNA helices of the 16S rRNA. Its function is as follows. Forms an intersubunit bridge (bridge B4) with the 23S rRNA of the 50S subunit in the ribosome. This chain is Small ribosomal subunit protein uS15, found in Mycobacterium bovis (strain ATCC BAA-935 / AF2122/97).